A 443-amino-acid chain; its full sequence is EGF-containing fibulin-like extracellular matrix protein 2 (443 aa).

Positions 1–23 (MLPCASCLPGSLLLWALLLLLLG) are cleaved as a signal peptide. One can recognise an EGF-like 1; atypical domain in the interval 36–81 (YTECTDGYEWDPDSQHCRDVNECLTIPEACKGEMKCINHYGGYLCL). 18 disulfide bridges follow: Cys58–Cys121, Cys65–Cys80, Cys71–Cys109, Cys127–Cys140, Cys134–Cys149, Cys151–Cys162, Cys168–Cys177, Cys173–Cys186, Cys188–Cys201, Cys207–Cys217, Cys213–Cys226, Cys228–Cys241, Cys247–Cys258, Cys254–Cys267, Cys269–Cys281, Cys287–Cys300, Cys294–Cys309, and Cys315–Cys327. The 41-residue stretch at 123–163 (DVDECAQALHDCRPSQDCHNLPGSYQCTCPDGYRKIGPECV) folds into the EGF-like 2; calcium-binding domain. An EGF-like 3; calcium-binding domain is found at 164–202 (DIDECRYRYCQHRCVNLPGSFRCQCEPGFQLGPNNRSCV). Asn198 is a glycosylation site (N-linked (GlcNAc...) asparagine). Residues 203–242 (DVNECDMGAPCEQRCFNSYGTFLCRCHQGYELHRDGFSCS) enclose the EGF-like 4; calcium-binding domain. The EGF-like 5; calcium-binding domain occupies 243–282 (DIDECSYSSYLCQYRCINEPGRFSCHCPQGYQLLATRLCQ). Positions 283–328 (DIDECESGAHQCSEAQTCVNFHGGYRCVDTNRCVEPYIQVSENRCL) constitute an EGF-like 6; calcium-binding domain. Residue Asn394 is glycosylated (N-linked (GlcNAc...) asparagine).

It belongs to the fibulin family. As to quaternary structure, homodimer; disulfide-linked. Multimer; allows heparin binding. Monomer. Interacts with FBN1 (via N-terminal domain); this interaction inhibits EFEMP2 binding to LOX and ELN. Interacts with LOX (via propeptide); this interaction is strong and facilitates formation of ternary complexes with ELN during elastic fiber assembly; this interaction limits interaction of EFEMP2 with FBLN5. Interacts with PITX2. Interacts with ELN with moderate affinity; this interaction regulates ELN self-assembly maturation stage. Interacts with FBLN5 with moderate affinity. Interacts with LOXL1 (via propeptide), LTBP1 and TGFB1 stronger than with LOXL2 and LTBP3. Interacts with PCOLCE. Interacts with collagen type IV trimer (COL4A1-COL4A1-COL4A2), NID2 and moderately with COL15A1-derived endostatin. Interacts with EMILIN1; this interaction promotes the incorporation of EFEMP2 into the extracellular matrix. Interacts with LTBP4; the LTBP4 long form (LTBP4L) has a stronger binding affinity than the LTBP4 short form and the LTBP4 long form promotes fibrillar deposition of EFEMP2. In terms of processing, N-glycosylated; contains mostly complex-type glycans. Not O-glycosylated. Post-translationally, cleaved by ELANE; produces a 50-55 kDa fragment. Cleaved by MMP2 and MMP9; produces several fragments.

It localises to the secreted. The protein resides in the extracellular space. Its subcellular location is the extracellular matrix. It is found in the basement membrane. Functionally, plays a crucial role in elastic fiber formation in tissue, and in the formation of ultrastructural connections between elastic laminae and smooth muscle cells in the aorta, therefore participates in terminal differentiation and maturation of smooth muscle cell (SMC) and in the mechanical properties and wall integrity maintenance of the aorta. In addition, is involved in the control of collagen fibril assembly in tissue throught proteolytic activation of LOX leading to cross- linking of collagen and elastin. Also promotes ELN coacervation and participates in the deposition of ELN coacervates on to microfibrils but also regulates ELN cross- linking through LOX interaction. Moreover adheres to the cells through heparin binding in a calcium-dependent manner and regulates vascularlar smooth muscle cells proliferation through angiotensin signaling. The sequence is that of EGF-containing fibulin-like extracellular matrix protein 2 from Homo sapiens (Human).